The sequence spans 582 residues: Putative transcriptional regulator HVO_1357 (582 aa).

Residues 19–129 (VVLVVDDDED…EVKETVEELL (111 aa)) form the Response regulatory domain. Asp67 bears the 4-aspartylphosphate mark. The stretch at 165 to 203 (LSDLRSRLEAVRAEHEAAIRNREAQLDRLNRTNELLRDV) forms a coiled coil. The 53-residue stretch at 517-569 (LTDRQRTVLETSLVSGYFEWPRGSTAEEVADSLGISPPTLHEHLRTAERKLIE) folds into the HTH bat-type domain.

Functionally, may be part of a signal-dependent gene regulation cascade that is relevant to swimming motility. May be involved in the transcription regulation of target genes. In Haloferax volcanii (strain ATCC 29605 / DSM 3757 / JCM 8879 / NBRC 14742 / NCIMB 2012 / VKM B-1768 / DS2) (Halobacterium volcanii), this protein is Putative transcriptional regulator HVO_1357.